A 347-amino-acid chain; its full sequence is GMP reductase (347 aa).

Ala-108–Ala-131 provides a ligand contact to NADP(+). Gly-181 and Gly-183 together coordinate K(+). The active-site Thioimidate intermediate is the Cys-186. Ile-216–Val-239 lines the NADP(+) pocket.

It belongs to the IMPDH/GMPR family. GuaC type 1 subfamily. As to quaternary structure, homotetramer.

The catalysed reaction is IMP + NH4(+) + NADP(+) = GMP + NADPH + 2 H(+). In terms of biological role, catalyzes the irreversible NADPH-dependent deamination of GMP to IMP. It functions in the conversion of nucleobase, nucleoside and nucleotide derivatives of G to A nucleotides, and in maintaining the intracellular balance of A and G nucleotides. This is GMP reductase from Shigella flexneri.